The chain runs to 360 residues: Phospho-N-acetylmuramoyl-pentapeptide-transferase (360 aa).

A run of 10 helical transmembrane segments spans residues 27–47 (IVSL…LIAW), 72–92 (PTMG…MWAY), 94–114 (SNPY…VGFI), 132–152 (WKYF…YSIG), 168–188 (IMPQ…VGTS), 199–219 (GLAI…AWAT), 236–256 (AGEL…FLWF), 263–283 (VFMG…IAVL), 288–308 (FLLV…ILQV), and 338–358 (VIVR…ATLK).

This sequence belongs to the glycosyltransferase 4 family. MraY subfamily. It depends on Mg(2+) as a cofactor.

The protein localises to the cell inner membrane. The enzyme catalyses UDP-N-acetyl-alpha-D-muramoyl-L-alanyl-gamma-D-glutamyl-meso-2,6-diaminopimeloyl-D-alanyl-D-alanine + di-trans,octa-cis-undecaprenyl phosphate = di-trans,octa-cis-undecaprenyl diphospho-N-acetyl-alpha-D-muramoyl-L-alanyl-D-glutamyl-meso-2,6-diaminopimeloyl-D-alanyl-D-alanine + UMP. The protein operates within cell wall biogenesis; peptidoglycan biosynthesis. Functionally, catalyzes the initial step of the lipid cycle reactions in the biosynthesis of the cell wall peptidoglycan: transfers peptidoglycan precursor phospho-MurNAc-pentapeptide from UDP-MurNAc-pentapeptide onto the lipid carrier undecaprenyl phosphate, yielding undecaprenyl-pyrophosphoryl-MurNAc-pentapeptide, known as lipid I. The polypeptide is Phospho-N-acetylmuramoyl-pentapeptide-transferase (Yersinia pseudotuberculosis serotype O:1b (strain IP 31758)).